The primary structure comprises 381 residues: MERSLLPEPPLAMALLGPRFEAQTGGNRSVLDNVLPDMAPLVNPYWSRFAPMDPTMSKILGLFTLVILIISCCGNGVVVYIFGGTKSLRTPANLLVLNLAFSDFCMMASQSPVMIINFYYETWVLGPLWCDIYAACGSLFGCVSIWSMCMIAFDRYNVIVKGINGTPMTIKTSIMKIAFIWMMAVFWTIMPLIGWSSYVPEGNLTACSIDYMTRQWNPRSYLITYSLFVYYTPLFMICYSYWFIIATVAAHEKAMRDQAKKMNVKSLRSSEDCDKSAENKLAKVALTTISLWFMAWTPYLIICYFGLFKIDGLTPLTTIWGATFAKTSAVYNPIVYGISHPKYRLVLKEKCPMCVCGSTDEPKPDAPPSDTETTSEAESKA.

Residues 1-56 (MERSLLPEPPLAMALLGPRFEAQTGGNRSVLDNVLPDMAPLVNPYWSRFAPMDPTM) are Extracellular-facing. An N-linked (GlcNAc...) asparagine glycan is attached at Asn27. A helical transmembrane segment spans residues 57-81 (SKILGLFTLVILIISCCGNGVVVYI). Residues 82 to 93 (FGGTKSLRTPAN) are Cytoplasmic-facing. The chain crosses the membrane as a helical span at residues 94-119 (LLVLNLAFSDFCMMASQSPVMIINFY). Residues 120–133 (YETWVLGPLWCDIY) lie on the Extracellular side of the membrane. A disulfide bond links Cys130 and Cys207. A helical transmembrane segment spans residues 134–153 (AACGSLFGCVSIWSMCMIAF). The Cytoplasmic segment spans residues 154 to 172 (DRYNVIVKGINGTPMTIKT). A helical membrane pass occupies residues 173-196 (SIMKIAFIWMMAVFWTIMPLIGWS). Residues 197-220 (SYVPEGNLTACSIDYMTRQWNPRS) are Extracellular-facing. Residues 221 to 248 (YLITYSLFVYYTPLFMICYSYWFIIATV) form a helical membrane-spanning segment. Residues 249 to 283 (AAHEKAMRDQAKKMNVKSLRSSEDCDKSAENKLAK) lie on the Cytoplasmic side of the membrane. Residues 284 to 307 (VALTTISLWFMAWTPYLIICYFGL) traverse the membrane as a helical segment. The Extracellular portion of the chain corresponds to 308–314 (FKIDGLT). A helical membrane pass occupies residues 315 to 339 (PLTTIWGATFAKTSAVYNPIVYGIS). Residue Lys326 is modified to N6-(retinylidene)lysine. Topologically, residues 340-381 (HPKYRLVLKEKCPMCVCGSTDEPKPDAPPSDTETTSEAESKA) are cytoplasmic. Residues 358-381 (STDEPKPDAPPSDTETTSEAESKA) are disordered. Residues 370–381 (DTETTSEAESKA) show a composition bias toward polar residues.

The protein belongs to the G-protein coupled receptor 1 family. Opsin subfamily. Post-translationally, some or all of the Ser/Thr residues present in the C-terminal part may be phosphorylated.

The protein localises to the membrane. Visual pigments are the light-absorbing molecules that mediate vision. They consist of an apoprotein, opsin, covalently linked to cis-retinal. This chain is Opsin Rh2 (Rh2), found in Drosophila pseudoobscura pseudoobscura (Fruit fly).